The following is a 133-amino-acid chain: Large ribosomal subunit protein bL20 (133 aa).

It belongs to the bacterial ribosomal protein bL20 family.

In terms of biological role, binds directly to 23S ribosomal RNA and is necessary for the in vitro assembly process of the 50S ribosomal subunit. It is not involved in the protein synthesizing functions of that subunit. This is Large ribosomal subunit protein bL20 from Rubrobacter xylanophilus (strain DSM 9941 / JCM 11954 / NBRC 16129 / PRD-1).